We begin with the raw amino-acid sequence, 311 residues long: Cadmium, cobalt and zinc/H(+)-K(+) antiporter (311 aa).

At 1 to 12 (MGHNHNEGANKK) the chain is on the extracellular side. The chain crosses the membrane as a helical span at residues 13–33 (VLLISFIMITGYMIIEAIGGF). Residues 34-43 (LTNSLALLSD) lie on the Cytoplasmic side of the membrane. Residues 44-64 (AGHMLSDSISLMVALIAFTLA) traverse the membrane as a helical segment. Residues 65-78 (EKKANHNKTFGYKR) are Extracellular-facing. The helical transmembrane segment at 79–99 (FEILAAVINGAALILISLYII) threads the bilayer. Topologically, residues 100-115 (YEAIERFSNPPKVATT) are cytoplasmic. Residues 116–136 (GMLTISIIGLVVNLLVAWIMM) traverse the membrane as a helical segment. Residues 137-157 (SGGDTKNNLNIRGAYLHVISD) are Extracellular-facing. A helical transmembrane segment spans residues 158–178 (MLGSVGAILAAILIIFFGWGW). Topologically, residues 179–311 (ADPLASIIVA…MEKQRDHHHH (133 aa)) are cytoplasmic.

The protein belongs to the cation diffusion facilitator (CDF) transporter (TC 2.A.4) family. SLC30A subfamily.

It is found in the cell membrane. Functionally, involved in divalent cation and potassium homeostasis in the cell. Catalyzes the active efflux of zinc, cadmium and cobalt, in exchange for potassium and H(+) ions. This Bacillus subtilis (strain 168) protein is Cadmium, cobalt and zinc/H(+)-K(+) antiporter (czcD).